We begin with the raw amino-acid sequence, 40 residues long: Subtilisin-like serine protease AS-E1 (40 aa).

In terms of domain architecture, Peptidase S8 spans 4-40; sequence PWGLARISHRTTGATSYVYDDSAGEGTCSYIIDTGIY. The active-site Charge relay system is the Asp-36.

Belongs to the peptidase S8 family. As to quaternary structure, homodimer.

Its activity is regulated as follows. Strongly inhibited by antipain and PMSF. Inhibited by benzamidine and aprotinin by 80% and 17% respectively. Little or no inhibition by EDTA, E-64, iodoacetic acid, leupeptin and FUT-175. In terms of biological role, subtilisin-like serine protease. Cleaves prothrombin at 155-Arg-|-Ser-156, 45-Thr-|-Ala-46 and 316-Tyr-|-Ile-317 to produce meizothrombin(desF1)-like molecules. Degrades fibrinogen. Inhibits plasma coagulation. In Acremonium sp, this protein is Subtilisin-like serine protease AS-E1.